The primary structure comprises 160 residues: Periplasmic nitrate reductase, electron transfer subunit (160 aa).

An N-terminal signal peptide occupies residues 1-25 (MKTRIIFAALALAAAMPLLVSGVFA). The heme c site is built by His73, Cys87, Cys90, His91, His108, Cys127, Cys130, and His131.

Belongs to the NapB family. In terms of assembly, component of the periplasmic nitrate reductase NapAB complex composed of NapA and NapB. Post-translationally, binds 2 heme C groups per subunit.

It is found in the periplasm. Its function is as follows. Electron transfer subunit of the periplasmic nitrate reductase complex NapAB. Receives electrons from the membrane-anchored tetraheme c-type NapC protein and transfers these to NapA subunit, thus allowing electron flow between membrane and periplasm. Essential for periplasmic nitrate reduction with nitrate as the terminal electron acceptor. In Azospirillum brasilense, this protein is Periplasmic nitrate reductase, electron transfer subunit.